We begin with the raw amino-acid sequence, 41 residues long: uncharacterized protein (41 aa).

A signal peptide spans 1 to 23 (MNFLMRAIFSLLLLFTLSIPVIS).

This is an uncharacterized protein from Escherichia coli (strain K12).